A 385-amino-acid polypeptide reads, in one-letter code: 1-deoxy-D-xylulose 5-phosphate reductoisomerase 1 (385 aa).

NADPH is bound by residues T11, G12, S13, I14, N39, and N122. K123 contributes to the 1-deoxy-D-xylulose 5-phosphate binding site. E124 is a binding site for NADPH. D148 provides a ligand contact to Mn(2+). Residues S149, E150, S174, and H197 each contribute to the 1-deoxy-D-xylulose 5-phosphate site. E150 lines the Mn(2+) pocket. G203 is a binding site for NADPH. S210, N215, K216, and E219 together coordinate 1-deoxy-D-xylulose 5-phosphate. Mn(2+) is bound at residue E219.

The protein belongs to the DXR family. The cofactor is Mg(2+). Requires Mn(2+) as cofactor.

It carries out the reaction 2-C-methyl-D-erythritol 4-phosphate + NADP(+) = 1-deoxy-D-xylulose 5-phosphate + NADPH + H(+). The protein operates within isoprenoid biosynthesis; isopentenyl diphosphate biosynthesis via DXP pathway; isopentenyl diphosphate from 1-deoxy-D-xylulose 5-phosphate: step 1/6. Functionally, catalyzes the NADPH-dependent rearrangement and reduction of 1-deoxy-D-xylulose-5-phosphate (DXP) to 2-C-methyl-D-erythritol 4-phosphate (MEP). The sequence is that of 1-deoxy-D-xylulose 5-phosphate reductoisomerase 1 from Bacillus thuringiensis subsp. konkukian (strain 97-27).